Reading from the N-terminus, the 496-residue chain is NADH-quinone oxidoreductase subunit N (496 aa).

14 helical membrane passes run 12-32 (LNLI…IILI), 43-63 (SLYV…TLGL), 79-99 (VSIV…PLAL), 108-128 (SYPE…FMVA), 132-152 (LILI…LIAL), 166-186 (FTMG…IYAL), 207-227 (GLMI…AFKL), 257-277 (VAAF…GVEW), 280-300 (VVIL…ALVQ), 306-326 (MLAY…ALDT), 333-353 (IFFY…MLWM), 383-403 (AVIM…SIFW), 416-436 (GYVW…YYYL), and 464-484 (AVVG…QPLV).

Belongs to the complex I subunit 2 family. As to quaternary structure, NDH-1 is composed of 14 different subunits. Subunits NuoA, H, J, K, L, M, N constitute the membrane sector of the complex.

It is found in the cell inner membrane. It carries out the reaction a quinone + NADH + 5 H(+)(in) = a quinol + NAD(+) + 4 H(+)(out). NDH-1 shuttles electrons from NADH, via FMN and iron-sulfur (Fe-S) centers, to quinones in the respiratory chain. The immediate electron acceptor for the enzyme in this species is believed to be ubiquinone. Couples the redox reaction to proton translocation (for every two electrons transferred, four hydrogen ions are translocated across the cytoplasmic membrane), and thus conserves the redox energy in a proton gradient. The chain is NADH-quinone oxidoreductase subunit N from Sulfurovum sp. (strain NBC37-1).